A 362-amino-acid chain; its full sequence is Tyrosine-protein kinase SRK2 (362 aa).

The region spanning 1–70 (TFLVRESESK…GLCVNLRQPC (70 aa)) is the SH2 domain. One can recognise a Protein kinase domain in the interval 95-348 (ITLIRKLGAG…ALQWRLEDFF (254 aa)). Residues 101–109 (LGAGQFGEV) and Lys-123 each bind ATP. Asp-214 acts as the Proton acceptor in catalysis.

The protein belongs to the protein kinase superfamily. Tyr protein kinase family.

It is found in the cytoplasm. The enzyme catalyses L-tyrosyl-[protein] + ATP = O-phospho-L-tyrosyl-[protein] + ADP + H(+). This chain is Tyrosine-protein kinase SRK2 (SRK2), found in Spongilla lacustris (Freshwater sponge).